The following is a 532-amino-acid chain: Flavin-containing monooxygenase 3 (532 aa).

FAD contacts are provided by residues 9-13 (GAGVS), Glu32, 40-41 (LW), and 61-62 (NS). NADP(+)-binding positions include 60 to 61 (TN) and 195 to 198 (SGCD). Ser401 carries the phosphoserine modification. A helical membrane pass occupies residues 510–530 (FFFHWLKPFAIPILLIAVFLG).

Belongs to the FMO family. FAD serves as cofactor. As to expression, liver.

It localises to the microsome membrane. Its subcellular location is the endoplasmic reticulum membrane. The enzyme catalyses trimethylamine + NADPH + O2 = trimethylamine N-oxide + NADP(+) + H2O. The catalysed reaction is N,N-dimethylaniline + NADPH + O2 + H(+) = N,N-dimethylaniline N-oxide + NADP(+) + H2O. It carries out the reaction hypotaurine + NADPH + O2 + H(+) = taurine + NADP(+) + H2O. It catalyses the reaction (S)-nicotine + NADPH + O2 = trans-(S)-nicotine N(1')-oxide + NADP(+) + H2O. The enzyme catalyses albendazole + NADPH + O2 + H(+) = albendazole S-oxide + NADP(+) + H2O. Its function is as follows. Essential hepatic enzyme that catalyzes the oxygenation of a wide variety of nitrogen- and sulfur-containing compounds including drugs as well as dietary compounds. Plays an important role in the metabolism of trimethylamine (TMA), via the production of trimethylamine N-oxide (TMAO) metabolite. TMA is generated by the action of gut microbiota using dietary precursors such as choline, choline containing compounds, betaine or L-carnitine. By regulating TMAO concentration, FMO3 directly impacts both platelet responsiveness and rate of thrombus formation. The protein is Flavin-containing monooxygenase 3 (FMO3) of Macaca mulatta (Rhesus macaque).